Here is a 545-residue protein sequence, read N- to C-terminus: Carboxypeptidase Y homolog A (545 aa).

A signal peptide spans 1 to 18 (MKSSLALALLVGGAIASG). Positions 19 to 125 (PQQQVLREPV…RLDTYDLRVK (107 aa)) are excised as a propeptide. 5 cysteine pairs are disulfide-bonded: C179/C418, C313/C327, C337/C360, C344/C353, and C382/C388. The N-linked (GlcNAc...) asparagine glycan is linked to N210. Residue S266 is part of the active site. Residue D457 is part of the active site. N-linked (GlcNAc...) asparagine glycans are attached at residues N487 and N507. Residue H518 is part of the active site.

The protein belongs to the peptidase S10 family.

Its subcellular location is the vacuole. The enzyme catalyses Release of a C-terminal amino acid with broad specificity.. Vacuolar carboxypeptidase involved in degradation of small peptides. Digests preferentially peptides containing an aliphatic or hydrophobic residue in P1' position, as well as methionine, leucine or phenylalanine in P1 position of ester substrate. This is Carboxypeptidase Y homolog A (CPYA) from Ajellomyces capsulatus (strain NAm1 / WU24) (Darling's disease fungus).